A 38-amino-acid polypeptide reads, in one-letter code: Exendin-1 (38 aa).

O-linked (HexNAc...) serine; in Exendin-1 and Exendin-1b glycosylation occurs at serine 32.

Belongs to the glucagon family. O-linked glycan consists of Hex-HexNAc saccharide. In terms of processing, glycosylation may be of interest for the biological stability of exendin-1 and exendin-1b. As to expression, expressed by the venom gland.

It is found in the secreted. Its function is as follows. O-linked and free exendin-1 and exendin-1b have vasoactive intestinal peptide(VIP)/secretin-like biological activities. They interact with rat and human VIP receptors 1 (VIPR1) and 2 (VIPR2), with the highest affinity for the human VIPR2. They induce hypotension that is mediated by relaxation of cardiac smooth muscle. The protein is Exendin-1 of Heloderma horridum horridum (Mexican beaded lizard).